Consider the following 281-residue polypeptide: Small ribosomal subunit biogenesis GTPase RsgA (281 aa).

One can recognise a CP-type G domain in the interval 59 to 212 (QNEFIRPKVA…LIDTPGFSSL (154 aa)). Residues 108 to 111 (TKAD) and 155 to 163 (GQSGVGKTT) contribute to the GTP site. Zn(2+)-binding residues include Cys-235, Cys-240, His-242, and Cys-250.

Belongs to the TRAFAC class YlqF/YawG GTPase family. RsgA subfamily. In terms of assembly, monomer. Associates with 30S ribosomal subunit, binds 16S rRNA. It depends on Zn(2+) as a cofactor.

It localises to the cytoplasm. One of several proteins that assist in the late maturation steps of the functional core of the 30S ribosomal subunit. Helps release RbfA from mature subunits. May play a role in the assembly of ribosomal proteins into the subunit. Circularly permuted GTPase that catalyzes slow GTP hydrolysis, GTPase activity is stimulated by the 30S ribosomal subunit. This Mycoplasmopsis agalactiae (strain NCTC 10123 / CIP 59.7 / PG2) (Mycoplasma agalactiae) protein is Small ribosomal subunit biogenesis GTPase RsgA.